The sequence spans 560 residues: Nucleoprotein (560 aa).

The tract at residues L54 to I236 is binding site for the cap structure m7GTP. Mn(2+)-binding residues include D380 and E382. The Zn(2+) site is built by E390, C497, H500, and C521. D525 is a binding site for Mn(2+).

It belongs to the arenaviridae nucleocapsid protein family. Homomultimerizes to form the nucleocapsid. Binds to viral genomic RNA. Interacts with glycoprotein G2. Interacts with protein Z; this interaction probably directs the encapsidated genome to budding sites. Interacts with protein L; this interaction does not interfere with Z-L interaction. Interacts with host IKBKE (via Protein kinase domain); the interaction inhibits IKBKE kinase activity.

It is found in the virion. Its subcellular location is the host cytoplasm. Functionally, encapsidates the genome, protecting it from nucleases. The encapsidated genomic RNA is termed the nucleocapsid (NC). Serves as template for viral transcription and replication. The increased presence of protein N in host cell does not seem to trigger the switch from transcription to replication as observed in other negative strain RNA viruses. Through the interaction with host IKBKE, strongly inhibits the phosphorylation and nuclear translocation of host IRF3, a protein involved in interferon activation pathway, leading to the inhibition of interferon-beta and IRF3-dependent promoters activation. Also encodes a functional 3'-5' exoribonuclease that degrades preferentially dsRNA substrates and thereby participates in the suppression of interferon induction. This is Nucleoprotein from Homo sapiens (Human).